We begin with the raw amino-acid sequence, 336 residues long: Holliday junction branch migration complex subunit RuvB (336 aa).

The large ATPase domain (RuvB-L) stretch occupies residues 1 to 182 (MKERIVNLET…FGMSFRMQFY (182 aa)). Residues leucine 21, arginine 22, glycine 63, lysine 66, threonine 67, serine 68, 129-131 (EDF), arginine 172, tyrosine 182, and arginine 219 contribute to the ATP site. Residue threonine 67 participates in Mg(2+) binding. The small ATPAse domain (RuvB-S) stretch occupies residues 183-253 (SPSELALIIK…ITLHALNELG (71 aa)). A head domain (RuvB-H) region spans residues 256-336 (ELGFDEADLA…IPTLKSQSLF (81 aa)). Residues arginine 310 and arginine 315 each coordinate DNA.

It belongs to the RuvB family. As to quaternary structure, homohexamer. Forms an RuvA(8)-RuvB(12)-Holliday junction (HJ) complex. HJ DNA is sandwiched between 2 RuvA tetramers; dsDNA enters through RuvA and exits via RuvB. An RuvB hexamer assembles on each DNA strand where it exits the tetramer. Each RuvB hexamer is contacted by two RuvA subunits (via domain III) on 2 adjacent RuvB subunits; this complex drives branch migration. In the full resolvosome a probable DNA-RuvA(4)-RuvB(12)-RuvC(2) complex forms which resolves the HJ.

Its subcellular location is the cytoplasm. It carries out the reaction ATP + H2O = ADP + phosphate + H(+). In terms of biological role, the RuvA-RuvB-RuvC complex processes Holliday junction (HJ) DNA during genetic recombination and DNA repair, while the RuvA-RuvB complex plays an important role in the rescue of blocked DNA replication forks via replication fork reversal (RFR). RuvA specifically binds to HJ cruciform DNA, conferring on it an open structure. The RuvB hexamer acts as an ATP-dependent pump, pulling dsDNA into and through the RuvAB complex. RuvB forms 2 homohexamers on either side of HJ DNA bound by 1 or 2 RuvA tetramers; 4 subunits per hexamer contact DNA at a time. Coordinated motions by a converter formed by DNA-disengaged RuvB subunits stimulates ATP hydrolysis and nucleotide exchange. Immobilization of the converter enables RuvB to convert the ATP-contained energy into a lever motion, pulling 2 nucleotides of DNA out of the RuvA tetramer per ATP hydrolyzed, thus driving DNA branch migration. The RuvB motors rotate together with the DNA substrate, which together with the progressing nucleotide cycle form the mechanistic basis for DNA recombination by continuous HJ branch migration. Branch migration allows RuvC to scan DNA until it finds its consensus sequence, where it cleaves and resolves cruciform DNA. This is Holliday junction branch migration complex subunit RuvB from Helicobacter acinonychis (strain Sheeba).